The following is a 316-amino-acid chain: BRCA2 and CDKN1A-interacting protein (316 aa).

A disordered region spans residues 1–57; that stretch reads MASKAKKRAVGNGIQRPLGAPGQREEEEEEEDEVEDEEEDEDDSDEEEDEVDEIVDE. A compositionally biased stretch (acidic residues) spans 25-57; that stretch reads EEEEEEEDEVEDEEEDEDDSDEEEDEVDEIVDE. Residues Ser44 and Ser114 each carry the phosphoserine modification. Positions 61 to 169 are interaction with BRCA2; the sequence is IEFEAYSISD…EQSMVEQLDK (109 aa). Positions 163 to 261 are interaction with CDKN1A; sequence MVEQLDKLLN…NAEEEFFYEK (99 aa). Residue Ser283 is modified to Phosphoserine.

It belongs to the BCP1 family. In terms of assembly, interacts with BRCA2, CDKN1A and MTDH/LYRIC. Interacts with DCTN1/p150-glued and ACTR1A/ARP1. Interacts with alpha-, beta- and gamma-tubulins. Interacts with TENT5C; the interaction has no effect on TENT5C poly(A) polymerase function. As to expression, expressed in the testes (at protein level).

Its subcellular location is the nucleus. The protein localises to the cytoplasm. It is found in the cytoskeleton. The protein resides in the microtubule organizing center. It localises to the centrosome. Its subcellular location is the centriole. The protein localises to the spindle pole. Its function is as follows. During interphase, required for microtubule organizing and anchoring activities. During mitosis, required for the organization and stabilization of the spindle pole. May promote cell cycle arrest by enhancing the inhibition of CDK2 activity by CDKN1A. May be required for repair of DNA damage by homologous recombination in conjunction with BRCA2. May not be involved in non-homologous end joining (NHEJ). This is BRCA2 and CDKN1A-interacting protein (Bccip) from Mus musculus (Mouse).